A 179-amino-acid chain; its full sequence is Cellular nucleic acid-binding protein homolog (179 aa).

7 consecutive CCHC-type zinc fingers follow at residues 17 to 34 (PRCY…ECTK), 36 to 53 (SICY…ECTE), 58 to 75 (KTCY…DCPS), 83 to 100 (AECY…DCRT), 116 to 133 (MNCY…DCTM), 135 to 152 (VKCY…ECQQ), and 157 to 174 (QLCY…NCTS).

The protein to human CNBP and to retroviral nucleic acid binding proteins (NBP). Post-translationally, phosphorylated.

It localises to the nucleus. Functionally, acts in the sexual differentiation pathway. Is required for efficient conjugation. Double-stranded DNA-binding protein. The protein is Cellular nucleic acid-binding protein homolog (byr3) of Schizosaccharomyces pombe (strain 972 / ATCC 24843) (Fission yeast).